A 413-amino-acid polypeptide reads, in one-letter code: NAD-dependent dihydropyrimidine dehydrogenase subunit PreT (413 aa).

Residue Glu-287 coordinates NAD(+).

The protein belongs to the NADH dehydrogenase family. As to quaternary structure, heterotetramer of 2 PreA and 2 PreT subunits.

The catalysed reaction is 5,6-dihydrouracil + NAD(+) = uracil + NADH + H(+). It carries out the reaction 5,6-dihydrothymine + NAD(+) = thymine + NADH + H(+). Its function is as follows. Involved in pyrimidine base degradation. Catalyzes physiologically the reduction of uracil to 5,6-dihydrouracil (DHU) by using NADH as a specific cosubstrate. It also catalyzes the reverse reaction and the reduction of thymine to 5,6-dihydrothymine (DHT). This is NAD-dependent dihydropyrimidine dehydrogenase subunit PreT (preT) from Salmonella typhimurium (strain LT2 / SGSC1412 / ATCC 700720).